The sequence spans 179 residues: ATP synthase subunit delta (179 aa).

The protein belongs to the ATPase delta chain family. In terms of assembly, F-type ATPases have 2 components, F(1) - the catalytic core - and F(0) - the membrane proton channel. F(1) has five subunits: alpha(3), beta(3), gamma(1), delta(1), epsilon(1). F(0) has three main subunits: a(1), b(2) and c(10-14). The alpha and beta chains form an alternating ring which encloses part of the gamma chain. F(1) is attached to F(0) by a central stalk formed by the gamma and epsilon chains, while a peripheral stalk is formed by the delta and b chains.

Its subcellular location is the cell membrane. Functionally, f(1)F(0) ATP synthase produces ATP from ADP in the presence of a proton or sodium gradient. F-type ATPases consist of two structural domains, F(1) containing the extramembraneous catalytic core and F(0) containing the membrane proton channel, linked together by a central stalk and a peripheral stalk. During catalysis, ATP synthesis in the catalytic domain of F(1) is coupled via a rotary mechanism of the central stalk subunits to proton translocation. In terms of biological role, this protein is part of the stalk that links CF(0) to CF(1). It either transmits conformational changes from CF(0) to CF(1) or is implicated in proton conduction. This is ATP synthase subunit delta from Staphylococcus saprophyticus subsp. saprophyticus (strain ATCC 15305 / DSM 20229 / NCIMB 8711 / NCTC 7292 / S-41).